The following is a 498-amino-acid chain: MGERPCILAIDQGTTSSRAIVFDAAASVLAVAQTEFPQHYPADGWVEHDPEDIWRSTLEVSRQALQAAEAKGARVVAIGVTNQRETTLIWDRRTGRPIHNAIVWQDRRTAADCAALAADGNETMVQARSGLLLDPYFSATKAAWLLDHVSGARMRAENGHLAFGTVDSFLLWRLTGGRVHATDATNASRTNLFNIHTQDWDPELLRLFRVPAALLPEVKDSADSFGQTDPALFGRPLPVLGLVGDQQGATIGQCCFEPGTIKSTYGTGCFVVVNTGATPVPSRHRLLTTIAYRIDGRTDYALEGSIFIAGAAVQWLRDGLGIVRTAAETEALAAGLPDNGGVYMVPAFTGLGAPHWDAAARGTLTGLTRASGRAHLARAALEASCYQTCDLLAAMREDGATPAALRVDGGMVANGWMVQFLADLLDLPVDRPVVMETTALGAAYLAGRKAGLYGDFAEFTRVWRRDRRFDPAMPTSTRTALLAGWQDAVRRTRSGAPD.

Thr14 provides a ligand contact to ADP. The ATP site is built by Thr14, Thr15, and Ser16. Sn-glycerol 3-phosphate is bound at residue Thr14. Arg18 contributes to the ADP binding site. The sn-glycerol 3-phosphate site is built by Arg84, Glu85, Tyr136, and Asp245. Glycerol-binding residues include Arg84, Glu85, Tyr136, Asp245, and Gln246. Residues Thr267 and Gly310 each contribute to the ADP site. 4 residues coordinate ATP: Thr267, Gly310, Gln314, and Gly410. 2 residues coordinate ADP: Gly410 and Asn414.

The protein belongs to the FGGY kinase family.

It catalyses the reaction glycerol + ATP = sn-glycerol 3-phosphate + ADP + H(+). The protein operates within polyol metabolism; glycerol degradation via glycerol kinase pathway; sn-glycerol 3-phosphate from glycerol: step 1/1. With respect to regulation, inhibited by fructose 1,6-bisphosphate (FBP). Key enzyme in the regulation of glycerol uptake and metabolism. Catalyzes the phosphorylation of glycerol to yield sn-glycerol 3-phosphate. The chain is Glycerol kinase from Rhodospirillum centenum (strain ATCC 51521 / SW).